Here is a 140-residue protein sequence, read N- to C-terminus: Arsenate-mycothiol transferase ArsC1 (140 aa).

The protein belongs to the low molecular weight phosphotyrosine protein phosphatase family.

It is found in the cytoplasm. It carries out the reaction mycothiol + arsenate = arseno-mycothiol + H2O. In terms of biological role, involved in defense against toxic arsenate. Involved in the mycothiol/myoredoxin redox pathway which uses a mycothioltransferase mechanism; facilitates adduct formation between arsenate and mycothiol. In Corynebacterium glutamicum (strain ATCC 13032 / K051), this protein is Arsenate-mycothiol transferase ArsC1 (arsC1).